A 144-amino-acid polypeptide reads, in one-letter code: UPF0306 protein ESA_03544 (144 aa).

Belongs to the UPF0306 family.

The chain is UPF0306 protein ESA_03544 from Cronobacter sakazakii (strain ATCC BAA-894) (Enterobacter sakazakii).